We begin with the raw amino-acid sequence, 373 residues long: MTNRWSFDVKKNLVTLILTWLCLSISTAQAARIKDVSEVAGVRSNQLIGYGLVSGLPGTGESTPFTDQSFNAMLQNFGIQLPPGTKPKTKNVAAVMVTTTLPAFAKQGQVVDITVSSVGSAKSLRGGTLLQTFLKGLDGKTYAIAQGNLIVSGFSATGADGSKIVGNNPTVGRISGGAMVEREVPSPFGRGDFITFNLLDSDFTTAQRMADAVNNFLGPNMASAVDATSVRVRAPRDISQRVAFLSAVENVNFDPADGSAKIIVNSRTGTIVVGKHVRLRAAAVTHGGMTVAIKENQQVSQPGPFGNGKTVVTQDSDIEVTEKQGKMFKFEPGLTLDDLVRAVNEVGAAPSDLMAILQALKQAGAIEGQLIII.

The signal sequence occupies residues 1–30; it reads MTNRWSFDVKKNLVTLILTWLCLSISTAQA.

The protein belongs to the FlgI family. As to quaternary structure, the basal body constitutes a major portion of the flagellar organelle and consists of four rings (L,P,S, and M) mounted on a central rod.

The protein localises to the periplasm. It localises to the bacterial flagellum basal body. Functionally, assembles around the rod to form the L-ring and probably protects the motor/basal body from shearing forces during rotation. In Aliivibrio salmonicida (strain LFI1238) (Vibrio salmonicida (strain LFI1238)), this protein is Flagellar P-ring protein.